The sequence spans 317 residues: NF-kappa-B inhibitor alpha (317 aa).

The segment at 1–39 is disordered; sequence MFQAAERPQEWAMEGPRDGLKKERLLDDRHDSGLDSMKD. Residues 15–39 are compositionally biased toward basic and acidic residues; sequence GPRDGLKKERLLDDRHDSGLDSMKD. Residue Lys21 forms a Glycyl lysine isopeptide (Lys-Gly) (interchain with G-Cter in SUMO); alternate linkage. Lys21 is covalently cross-linked (Glycyl lysine isopeptide (Lys-Gly) (interchain with G-Cter in ubiquitin); alternate). Lys22 is covalently cross-linked (Glycyl lysine isopeptide (Lys-Gly) (interchain with G-Cter in ubiquitin)). A Destruction motif motif is present at residues 30–36; it reads HDSGLDS. Ser32 bears the Phosphoserine; by IKKA and IKKE mark. Position 36 is a phosphoserine; by IKKA, IKKB, IKKE and TBK1 (Ser36). Tyr42 bears the Phosphotyrosine; by Tyr-kinases mark. A Nuclear export signal motif is present at residues 45 to 54; the sequence is MVKELQEIRL. ANK repeat units lie at residues 73 to 103, 110 to 139, 143 to 172, 182 to 211, and 216 to 245; these read DGDSFLHLAIIHEEKALTMEVIRQVKGDLAF, LQQTPLHLAVITNQPEIAEALLGAGCDPEL, RGNTPLHLACEQGCLASVGVLTQSCTTPHL, NGHTCLHLASIHGYLGIVELLVSLGADVNA, and NGRTALHLAVDLQNPDLVSLLLKCGADVNR. The short motif at 110 to 120 is the Nuclear import signal element; the sequence is LQQTPLHLAVI. Asn210 and Asn244 each carry (3S)-3-hydroxyasparagine; by HIF1AN; partial. 2 positions are modified to phosphoserine; by CK2: Ser283 and Ser288. Thr291 carries the phosphothreonine; by CK2 modification. Ser293 is modified (phosphoserine; by CK2). Thr299 is subject to Phosphothreonine; by CK2.

The protein belongs to the NF-kappa-B inhibitor family. As to quaternary structure, interacts with RELA; the interaction requires the nuclear import signal. Part of a 70-90 kDa complex at least consisting of CHUK, IKBKB, NFKBIA, RELA, ELP1 and MAP3K14. Interacts with NKIRAS1 and NKIRAS2. Interacts with isoform 1 and isoform 2 of RWDD3; the interaction enhances sumoylation. Interacts with PRMT2. Interacts with PRKACA in platelets; this interaction is disrupted by thrombin and collagen. Interacts with MEFV. Interacts with DDRGK1; positively regulates NFKBIA phosphorylation and degradation. Interacts with HNRNPA2B1; the interaction may be mediated by the RRM2 domain of HNRNPA2B1, and HNRNPA2B1 may interact simultaneously with FAM76B and either NFKBIA or NFKBIE to form a complex. (Microbial infection) Interacts with HBV protein X. Phosphorylated at Ser-32 and Ser-36 by IKKA/CHUK and IKKB/IKBKB; disables inhibition of NF-kappa-B DNA-binding activity. Phosphorylation at positions 32 and 36 is prerequisite to recognition by the SCF(FBXW11) and SCF(BTRC) complexes, leading to polyubiquitination and subsequent degradation. Phosphorylated at Ser-32 in response to FK506 treatment: phosphorylation is independent of IKKA/CHUK and IKKB/IKBKB and promotes NFKBIA degradation, followed by NF-kappa-B activation. Phosphorylated at Tyr-42: its effect is however unclear. According to a report, phosphorylation at Tyr-42 activates NF-kappa-B without triggering proteolytic degradation of NFKBIA. According to another publication, phosphorylation at Tyr-42 inhibits NF-kappa-B activity by preventing phosphorylation at Ser-32 and Ser-36 and subsequent ubiquitination and degradation. In terms of processing, polyubiquitinated at Lys-21 and/or Lys-22 following phosphorylation at Ser-32 and Ser-36. Monoubiquitinated at Lys-21 and/or Lys-22 by UBE2D3. Ubiquitin chain elongation is then performed by CDC34 in cooperation with the SCF(FBXW11) E3 ligase complex, building ubiquitin chains from the UBE2D3-primed NFKBIA-linked ubiquitin. The resulting polyubiquitination leads to protein degradation. Also ubiquitinated by the SCF(BTRC) complex following stimulus-dependent phosphorylation at Ser-32 and Ser-36. Deubiquitinated by USP38, leading to NF-kappa-B inhibition. Post-translationally, sumoylated; sumoylation requires the presence of the nuclear import signal. Sumoylation blocks ubiquitination and proteasome-mediated degradation of the protein thereby increasing the protein stability. Hydroxylated by HIF1AN. In terms of processing, (Microbial infection) Deubiquitinated by porcine reproductive and respiratory syndrome virus Nsp2 protein, which thereby interferes with NFKBIA degradation and impairs subsequent NF-kappa-B activation.

It localises to the cytoplasm. It is found in the nucleus. Its function is as follows. Inhibits the activity of dimeric NF-kappa-B/REL complexes by trapping REL (RELA/p65 and NFKB1/p50) dimers in the cytoplasm by masking their nuclear localization signals. On cellular stimulation by immune and pro-inflammatory responses, becomes phosphorylated promoting ubiquitination and degradation, enabling the dimeric RELA to translocate to the nucleus and activate transcription. This chain is NF-kappa-B inhibitor alpha (NFKBIA), found in Homo sapiens (Human).